Here is a 283-residue protein sequence, read N- to C-terminus: Undecaprenyl-diphosphatase (283 aa).

Transmembrane regions (helical) follow at residues 40–60, 85–105, 113–133, 153–173, 193–213, 227–247, and 259–279; these read GAAF…IYFF, AKMG…GLLF, LRSL…LTIA, IGWK…IPGS, AARF…VFQL, LIAI…SIAF, and VFII…ATGM.

Belongs to the UppP family.

It is found in the cell inner membrane. It catalyses the reaction di-trans,octa-cis-undecaprenyl diphosphate + H2O = di-trans,octa-cis-undecaprenyl phosphate + phosphate + H(+). Functionally, catalyzes the dephosphorylation of undecaprenyl diphosphate (UPP). Confers resistance to bacitracin. This chain is Undecaprenyl-diphosphatase, found in Chlorobium limicola (strain DSM 245 / NBRC 103803 / 6330).